Reading from the N-terminus, the 114-residue chain is MILDRHITSRGYVCMRPATIAPLTPYDKWDGEKWVTDTEAQHSVAVDAAEAQRQSLIDTAMASISLIQLKLQAGRKLMQAETSRLNTVLDYIDAVTATDTSTAPDVIWPELPEE.

It belongs to the tfa family.

The polypeptide is Putative protein TfaS (tfaS) (Escherichia coli (strain K12)).